A 383-amino-acid polypeptide reads, in one-letter code: Succinyl-diaminopimelate desuccinylase (383 aa).

His-73 serves as a coordination point for Zn(2+). Residue Asp-75 is part of the active site. Zn(2+) is bound at residue Asp-107. Glu-141 acts as the Proton acceptor in catalysis. Positions 142, 170, and 356 each coordinate Zn(2+).

It belongs to the peptidase M20A family. DapE subfamily. Homodimer. Zn(2+) is required as a cofactor. The cofactor is Co(2+).

The enzyme catalyses N-succinyl-(2S,6S)-2,6-diaminopimelate + H2O = (2S,6S)-2,6-diaminopimelate + succinate. Its pathway is amino-acid biosynthesis; L-lysine biosynthesis via DAP pathway; LL-2,6-diaminopimelate from (S)-tetrahydrodipicolinate (succinylase route): step 3/3. Its function is as follows. Catalyzes the hydrolysis of N-succinyl-L,L-diaminopimelic acid (SDAP), forming succinate and LL-2,6-diaminopimelate (DAP), an intermediate involved in the bacterial biosynthesis of lysine and meso-diaminopimelic acid, an essential component of bacterial cell walls. This chain is Succinyl-diaminopimelate desuccinylase, found in Pseudomonas putida (strain GB-1).